The primary structure comprises 315 residues: Tyrosine--tRNA ligase (315 aa).

Tyrosine 32 is an L-tyrosine binding site. Positions 37–45 (PSGEIHLGH) match the 'HIGH' region motif. L-tyrosine contacts are provided by tyrosine 152, glutamine 156, aspartate 159, and glutamine 174. The 'KMSKS' region motif lies at 208–212 (KMSSS). Serine 211 contacts ATP.

This sequence belongs to the class-I aminoacyl-tRNA synthetase family. TyrS type 3 subfamily. In terms of assembly, homodimer.

The protein localises to the cytoplasm. The catalysed reaction is tRNA(Tyr) + L-tyrosine + ATP = L-tyrosyl-tRNA(Tyr) + AMP + diphosphate + H(+). Functionally, catalyzes the attachment of tyrosine to tRNA(Tyr) in a two-step reaction: tyrosine is first activated by ATP to form Tyr-AMP and then transferred to the acceptor end of tRNA(Tyr). This Methanoculleus marisnigri (strain ATCC 35101 / DSM 1498 / JR1) protein is Tyrosine--tRNA ligase.